The chain runs to 174 residues: Regenerating islet-derived protein 3-gamma (174 aa).

A signal peptide spans 1-26 (MLPRVALTTMSWMLLSSLMLLSQVQG). The propeptide occupies 27–37 (EDAKEDVPTSR). 3 disulfide bridges follow: Cys40–Cys51, Cys68–Cys170, and Cys145–Cys162. The 125-residue stretch at 47-171 (YGSYCYALFS…CISELPYVCK (125 aa)) folds into the C-type lectin domain. The sufficient to activate EXTL3 stretch occupies residues 103-118 (WIGLHDPTLGQEPNRG). Position 107 (His107) interacts with Zn(2+). The EPN signature appears at 114-116 (EPN). The Zn(2+) site is built by Glu121 and His144.

As to quaternary structure, forms a hexameric membrane-permeabilizing oligomeric pore on membrane phospholipids. The hexamer is formed by three dimers related by helical symmetry. Forms filaments, filamentation traps pore complexes and limits damage to host cells. Interacts with EXTL3. In terms of processing, proteolytic processing by trypsin removes an inhibitory N-terminal propeptide and is essential for peptidoglycan binding and antibacterial activity. Expressed in injured skeletal muscles and sciatic nerve (at protein level). Expressed in the pancreas. Expression increases during the acute phase of pancreatitis.

Its subcellular location is the secreted. The protein resides in the cytoplasm. Its activity is regulated as follows. Lipopolysaccharide inhibits pore-forming activity, explaining why is bactericidal for Gram-positive but not Gram-negative bacteria. Its function is as follows. Bactericidal C-type lectin which acts exclusively against Gram-positive bacteria and mediates bacterial killing by binding to surface-exposed carbohydrate moieties of peptidoglycan. Restricts bacterial colonization of the intestinal epithelial surface and consequently limits activation of adaptive immune responses by the microbiota. Acts as a hormone in response to different stimuli like anti-inflammatory signals, such as IL17A, or gut microbiome. Is secreted by different cell types to activate its receptor EXTL3 and induce cell specific signaling pathways. Induced by IL17A in keratinocytes, regulates keratinocyte proliferation and differentiation after skin injury. In parallel, inhibits skin inflammation through the inhibition of inflammatory cytokines such as IL6 and TNF. Induced by IL22 in lung epithelial cells, inhibits cytokine production and regulates allergic airway inflammation. Induced in small intestine by inulin-enriched diet and Lactobacillus gasseri enriched microbiome, plays a role in the improvement of gut barrier function, the regulation of energy balance and glucose levels. Modulates microbiota composition in duodenal contents. Produced by nociceptor in response to endotoxins, prevents endotoxic death by targeting kynurenine pathway in microglia. Functionally, has bacteriostatic activity. In terms of biological role, has bactericidal activity against L.monocytogenes and methicillin-resistant S.aureus. The sequence is that of Regenerating islet-derived protein 3-gamma from Rattus norvegicus (Rat).